The sequence spans 185 residues: MSAMPDHWIKEKALKEGMISPFVDHKEEAGVLSYGLSSYGYDARVDSKFKIFANTHSSIVDPKNFPQDSFIDKETDVCIMPPNSFMLAKTVEYFRIPKDVIVICVGKSTYARCGIVVSVTPLEPGWEGYVTLEFSNTAPLPVKVYAFEGACQFIFLAGNERCSISYDQVNGKYMRQGGVTLPIVS.

DCTP-binding positions include 107–112 (KSTYAR), 131–133 (TLE), glutamine 152, tyrosine 166, and glutamine 176. Glutamate 133 acts as the Proton donor/acceptor in catalysis.

It belongs to the dCTP deaminase family. In terms of assembly, homotrimer.

It catalyses the reaction dCTP + H2O + H(+) = dUTP + NH4(+). It participates in pyrimidine metabolism; dUMP biosynthesis; dUMP from dCTP (dUTP route): step 1/2. Its function is as follows. Catalyzes the deamination of dCTP to dUTP. The polypeptide is dCTP deaminase (Anaplasma marginale (strain Florida)).